Reading from the N-terminus, the 268-residue chain is Lectin ESA-2 (268 aa).

4 repeat units span residues 1–67, 68–135, 136–202, and 203–268. Positions 1–268 are 4 X approximate tandem repeats; it reads GRYTVQNQWG…PIGFKGVATS (268 aa).

As to quaternary structure, monomer.

In terms of biological role, lectin specific for high mannose N-glycans, recognizes the branched moiety of these glycans. Does not recognize other types of N-glycans or monosaccharides. Agglutinates trypsin-treated sheep and rabbit erythrocytes and untreated sheep erythrocytes. Has mitogenic activity on mouse lymphocytes. Does not require metal ions for activity. This chain is Lectin ESA-2, found in Eucheuma serra (Marine red alga).